The following is a 200-amino-acid chain: Large ribosomal subunit protein uL13 (200 aa).

Belongs to the universal ribosomal protein uL13 family. In terms of assembly, component of the large ribosomal subunit. Mature ribosomes consist of a small (40S) and a large (60S) subunit. The 40S subunit contains about 32 different proteins and 1 molecule of RNA (18S). The 60S subunit contains 45 different proteins and 3 molecules of RNA (25S, 5.8S and 5S).

Its subcellular location is the cytoplasm. Functionally, component of the ribosome, a large ribonucleoprotein complex responsible for the synthesis of proteins in the cell. The small ribosomal subunit (SSU) binds messenger RNAs (mRNAs) and translates the encoded message by selecting cognate aminoacyl-transfer RNA (tRNA) molecules. The large subunit (LSU) contains the ribosomal catalytic site termed the peptidyl transferase center (PTC), which catalyzes the formation of peptide bonds, thereby polymerizing the amino acids delivered by tRNAs into a polypeptide chain. The nascent polypeptides leave the ribosome through a tunnel in the LSU and interact with protein factors that function in enzymatic processing, targeting, and the membrane insertion of nascent chains at the exit of the ribosomal tunnel. In Candida albicans (strain SC5314 / ATCC MYA-2876) (Yeast), this protein is Large ribosomal subunit protein uL13.